The primary structure comprises 220 residues: Metalloproteinase inhibitor 2 (220 aa).

Residues 1 to 26 (MGAAARTLRLALGLLLLATLLRPADA) form the signal peptide. Cysteine 27 is a Zn(2+) binding site. 2 involved in metalloproteinase-binding regions span residues 27–30 (CSCS) and 95–96 (SA). 6 disulfides stabilise this stretch: cysteine 27/cysteine 98, cysteine 29/cysteine 127, cysteine 39/cysteine 152, cysteine 154/cysteine 201, cysteine 159/cysteine 164, and cysteine 172/cysteine 193. Residues 27–152 (CSCSPVHPQQ…SLNHRYQMGC (126 aa)) form the NTR domain.

This sequence belongs to the protease inhibitor I35 (TIMP) family. As to quaternary structure, interacts (via the C-terminal) with MMP2 (via the C-terminal PEX domain); the interaction inhibits the MMP2 activity. The activity of TIMP2 is dependent on the presence of disulfide bonds.

The protein localises to the secreted. In terms of biological role, complexes with metalloproteinases (such as collagenases) and irreversibly inactivates them by binding to their catalytic zinc cofactor. Known to act on MMP-1, MMP-2, MMP-3, MMP-7, MMP-8, MMP-9, MMP-10, MMP-13, MMP-14, MMP-15, MMP-16 and MMP-19. The protein is Metalloproteinase inhibitor 2 (TIMP2) of Homo sapiens (Human).